We begin with the raw amino-acid sequence, 127 residues long: Large-conductance mechanosensitive channel (127 aa).

The next 2 helical transmembrane spans lie at 14–34 (VLDL…VKSL) and 69–89 (GAFL…FLIV).

Belongs to the MscL family. As to quaternary structure, homopentamer.

It localises to the cell membrane. Its function is as follows. Channel that opens in response to stretch forces in the membrane lipid bilayer. May participate in the regulation of osmotic pressure changes within the cell. In Leuconostoc mesenteroides subsp. mesenteroides (strain ATCC 8293 / DSM 20343 / BCRC 11652 / CCM 1803 / JCM 6124 / NCDO 523 / NBRC 100496 / NCIMB 8023 / NCTC 12954 / NRRL B-1118 / 37Y), this protein is Large-conductance mechanosensitive channel.